Consider the following 307-residue polypeptide: Retron Ec86 putative ribosyltransferase/DNA-binding protein (307 aa).

Functionally, possible ribosyltransferase/DNA-binding component of antiviral defense system retron Ec86, composed of a non-coding RNA (ncRNA), a ribosyltransferase/DNA-binding protein and a reverse transcriptase (RT). Expression of the 3-gene retron confers protection against bacteriophages T5. At multiplicity of infection (MOI) of 0.02 cultures grow normally when infected with T5 without collapsing, at MOI 2 cultures enter growth stasis. This Escherichia coli protein is Retron Ec86 putative ribosyltransferase/DNA-binding protein.